The primary structure comprises 210 residues: MRSKPVVIGIAGGSGSGKTSVTNSIYEKFKGHSILMLQQDLYYKNQSHMPFEECLLTNYDHPLAFDNDLMFEHLEQLLRYESIEKPIYDFKLNTRSEETVHVEPKDVIIVEGIFALEDERLRDLMDIKLYVDTDADLRIIRRILRDTKERGRSIDSVIEQYVSVVRPMHNQFIEPTKRYADIIIPEGGQNHVAIDLMVTKIQTILQSRAE.

An ATP-binding site is contributed by 12–19 (GGSGSGKT).

It belongs to the uridine kinase family.

Its subcellular location is the cytoplasm. The enzyme catalyses uridine + ATP = UMP + ADP + H(+). It carries out the reaction cytidine + ATP = CMP + ADP + H(+). It functions in the pathway pyrimidine metabolism; CTP biosynthesis via salvage pathway; CTP from cytidine: step 1/3. It participates in pyrimidine metabolism; UMP biosynthesis via salvage pathway; UMP from uridine: step 1/1. In Bacillus pumilus (strain SAFR-032), this protein is Uridine kinase.